A 610-amino-acid chain; its full sequence is Elongation factor 4 (610 aa).

The tr-type G domain occupies Ser13 to Lys195. GTP is bound by residues Asp25–Thr30 and Asn142–Asp145.

This sequence belongs to the TRAFAC class translation factor GTPase superfamily. Classic translation factor GTPase family. LepA subfamily.

The protein resides in the cell inner membrane. The catalysed reaction is GTP + H2O = GDP + phosphate + H(+). In terms of biological role, required for accurate and efficient protein synthesis under certain stress conditions. May act as a fidelity factor of the translation reaction, by catalyzing a one-codon backward translocation of tRNAs on improperly translocated ribosomes. Back-translocation proceeds from a post-translocation (POST) complex to a pre-translocation (PRE) complex, thus giving elongation factor G a second chance to translocate the tRNAs correctly. Binds to ribosomes in a GTP-dependent manner. This Rhizobium etli (strain CIAT 652) protein is Elongation factor 4.